Here is a 658-residue protein sequence, read N- to C-terminus: Probable mitochondrial Rho GTPase gemA (658 aa).

The Cytoplasmic segment spans residues 1–633 (MKNNIKVILI…NGSNGSNNSN (633 aa)). Positions 2–175 (KNNIKVILIG…LYASQTSVFF (174 aa)) constitute a Miro 1 domain. GTP contacts are provided by residues 11–18 (GDEQVGKS), 57–62 (DTFDDG), and 118–121 (NKLD). 2 EF-hand domains span residues 191-226 (GCER…CGHE) and 311-346 (MGNE…TPKI). Ca(2+) is bound by residues aspartate 204, aspartate 206, aspartate 208, serine 210, glutamate 215, aspartate 324, aspartate 326, aspartate 328, and aspartate 335. Residues 420–616 (RNIVNCYVFG…YHEMMETIVN (197 aa)) enclose the Miro 2 domain. GTP is bound by residues 429–436 (GAEAVGKT), 466–468 (LLK), and 530–533 (TKNN). The interval 532–575 (NNNNNNNNNNNNNNNNNNNNLNNNNNNINNNNNNNNNNTTTTNA) is disordered. The chain crosses the membrane as a helical; Anchor for type IV membrane protein span at residues 634–656 (ILTYLVIAAGVAGVGLLLSKYLA). Topologically, residues 657-658 (KK) are mitochondrial intermembrane.

It belongs to the mitochondrial Rho GTPase family.

It is found in the mitochondrion outer membrane. Mitochondrial GTPase involved in mitochondrial trafficking. Probably involved in control of anterograde transport of mitochondria and their subcellular distribution. In Dictyostelium discoideum (Social amoeba), this protein is Probable mitochondrial Rho GTPase gemA (gemA).